Consider the following 348-residue polypeptide: Aminotransferase atnJ (348 aa).

Arg-79 serves as a coordination point for pyridoxal 5'-phosphate. Position 180 is an N6-(pyridoxal phosphate)lysine (Lys-180). A pyridoxal 5'-phosphate-binding site is contributed by Glu-216.

Belongs to the class-IV pyridoxal-phosphate-dependent aminotransferase family. The cofactor is pyridoxal 5'-phosphate.

The protein operates within secondary metabolite biosynthesis. In terms of biological role, aminotransferase; part of the gene cluster that mediates the biosynthesis of aspercryptins, linear lipopeptides built from six amino acids including 2 highly unusual and nonproteogenic amino acids, 2-amino-octanoic acid (2aoa) and 2-amino-dodecanol (2adol). The core structure of aspercryptins is as follows: Ser/Ala-Thr-Ile/Val-2aoa-Asn-2adol. The first step of aspercryptin biosynthesis is the generation of the fatty acid precursors, octanoic and dodecanoic acids, by the FAS subunits atnF and atnM. The fatty acid precursors are likely transformed into the corresponding alpha-amino fatty acids in three steps. First, they are hydroxylated by the cytochrome P450 monooxygenase atnE, then oxidized to the corresponding alpha-keto acids by the NAD(P)-dependent oxidoreductase atnD, and finally converted to the alpha-amino fatty acids by the PLP-dependent aminotransferases atnH or atnJ. the alpha-amino fatty acids, 2-amino-octanoic and 2-amino-dodecanoic acids, are recognized, activated, and covalently tethered to the NRPS atnA by its fourth and sixth adenylation domains. The second module of atnA is the Thr module and contains an epimerase (E) domain responsible for the epimerization of Thr to D-allo-Thr. Additionally, despite atnA having only one epimerase domain, the first amino acid of aspercryptin A1 is D-Ser, suggesting that serine is either loaded directly as D-Ser on the first module or that the epimerase domain in the threonine module epimerizes both L-Ser and L-Thr. After condensation of the hexapeptide of aspercryptin, the C-terminal reductase (TE) domain might be involved in the reductive release and production of the aldehyde hexapeptide. Further reduction would generate aspercryptins. The variety of aspercryptins produced reflects the flexibility of the atnA NRPS, allowing incorporation of alanine instead of serine, valine for isoleucine, and a C10 fatty amino alcohol instead of the C12 version. AtnB seems to be involved in the selectivity for Ile versus Val by the third module. Moreover, type B, C and D aspercryptins have an additional N-terminal cichorine, acetyl and propionyl group respectively. The protein is Aminotransferase atnJ of Emericella nidulans (strain FGSC A4 / ATCC 38163 / CBS 112.46 / NRRL 194 / M139) (Aspergillus nidulans).